A 205-amino-acid chain; its full sequence is MFEYVTGYVEYVGPEYVVIDHNGIGYQIFTPNPYVFQRSKQEIRVYTYHYVREDIMALYGFKTREERLLFTKLLGVSGIGPKGALAILASGQTGQVVQAIEHEDEKFLVKFPGVGKKTARQMILDLKGKLADVVPDAFVDLFSDEERFDEKKGSSAELDEALEALRALGYAEREVSRVVPELLKESLTTDQYIKKALSLLLNGKR.

The tract at residues 1 to 62 (MFEYVTGYVE…EDIMALYGFK (62 aa)) is domain I. Positions 63-141 (TREERLLFTK…DVVPDAFVDL (79 aa)) are domain II. Residues 142–152 (FSDEERFDEKK) form a flexible linker region. A domain III region spans residues 153–205 (GSSAELDEALEALRALGYAEREVSRVVPELLKESLTTDQYIKKALSLLLNGKR).

This sequence belongs to the RuvA family. In terms of assembly, homotetramer. Forms an RuvA(8)-RuvB(12)-Holliday junction (HJ) complex. HJ DNA is sandwiched between 2 RuvA tetramers; dsDNA enters through RuvA and exits via RuvB. An RuvB hexamer assembles on each DNA strand where it exits the tetramer. Each RuvB hexamer is contacted by two RuvA subunits (via domain III) on 2 adjacent RuvB subunits; this complex drives branch migration. In the full resolvosome a probable DNA-RuvA(4)-RuvB(12)-RuvC(2) complex forms which resolves the HJ.

It localises to the cytoplasm. Its function is as follows. The RuvA-RuvB-RuvC complex processes Holliday junction (HJ) DNA during genetic recombination and DNA repair, while the RuvA-RuvB complex plays an important role in the rescue of blocked DNA replication forks via replication fork reversal (RFR). RuvA specifically binds to HJ cruciform DNA, conferring on it an open structure. The RuvB hexamer acts as an ATP-dependent pump, pulling dsDNA into and through the RuvAB complex. HJ branch migration allows RuvC to scan DNA until it finds its consensus sequence, where it cleaves and resolves the cruciform DNA. The protein is Holliday junction branch migration complex subunit RuvA of Bacillus cereus (strain AH187).